Reading from the N-terminus, the 234-residue chain is Carboxy-S-adenosyl-L-methionine synthase (234 aa).

S-adenosyl-L-methionine-binding positions include Tyr-35, 60-62, 109-110, Asn-124, and Arg-191; these read GCS and DI.

It belongs to the class I-like SAM-binding methyltransferase superfamily. Cx-SAM synthase family. In terms of assembly, homodimer.

It catalyses the reaction prephenate + S-adenosyl-L-methionine = carboxy-S-adenosyl-L-methionine + 3-phenylpyruvate + H2O. Functionally, catalyzes the conversion of S-adenosyl-L-methionine (SAM) to carboxy-S-adenosyl-L-methionine (Cx-SAM). In Campylobacter fetus subsp. fetus (strain 82-40), this protein is Carboxy-S-adenosyl-L-methionine synthase.